Consider the following 237-residue polypeptide: Sugar fermentation stimulation protein homolog (237 aa).

Belongs to the SfsA family.

This is Sugar fermentation stimulation protein homolog from Azorhizobium caulinodans (strain ATCC 43989 / DSM 5975 / JCM 20966 / LMG 6465 / NBRC 14845 / NCIMB 13405 / ORS 571).